Here is a 90-residue protein sequence, read N- to C-terminus: UPF0237 protein NMB1653 (90 aa).

Positions 5 to 83 constitute an ACT domain; sequence VITVIGKDRV…LDIRMQNEEI (79 aa).

Belongs to the UPF0237 family.

This is UPF0237 protein NMB1653 from Neisseria meningitidis serogroup B (strain ATCC BAA-335 / MC58).